The sequence spans 376 residues: E3 ubiquitin-protein ligase RNF133 (376 aa).

The 103-residue stretch at 65-167 folds into the PA domain; sequence SSTLKRVAGV…LKGTEIFHLI (103 aa). The chain crosses the membrane as a helical span at residues 190-210; sequence YLVSFVIVTTATLAYFIFYHI. An RING-type; atypical zinc finger spans residues 256–297; sequence CVICFERYKPNDIVRILTCKHFFHKNCIDPWILPHGTCPICK. The interval 327-376 is disordered; the sequence is ETLSPSEEETNNEVSPAGTSDKVIHVEENPTSQNNDIQPHSVVEDVHPSP. The span at 355–364 shows a compositional bias: polar residues; it reads NPTSQNNDIQ.

In terms of assembly, interacts with E3 ligase UBE2J1. In terms of processing, auto-ubiquitinated. In terms of tissue distribution, expression is testis-specific.

The protein localises to the endoplasmic reticulum membrane. It catalyses the reaction S-ubiquitinyl-[E2 ubiquitin-conjugating enzyme]-L-cysteine + [acceptor protein]-L-lysine = [E2 ubiquitin-conjugating enzyme]-L-cysteine + N(6)-ubiquitinyl-[acceptor protein]-L-lysine.. It functions in the pathway protein modification; protein ubiquitination. Has E3 ubiquitin-protein ligase activity. Plays a role in male fecundity through the interaction with the E2 ubituitin-protein ligase UBE2J1. This is E3 ubiquitin-protein ligase RNF133 from Homo sapiens (Human).